A 446-amino-acid chain; its full sequence is Methionine aminopeptidase 2-1 (446 aa).

A disordered region spans residues 1-88; the sequence is MAAQVTPELA…PPRVILSSIF (88 aa). Over residues 32–44 the composition is skewed to acidic residues; that stretch reads ENEDVESDDDNEG. Over residues 57 to 72 the composition is skewed to basic residues; the sequence is AKKKKKKKPKKKKKGG. His-196 is a binding site for substrate. Residues Asp-216, Asp-227, and His-296 each contribute to the a divalent metal cation site. Substrate is bound at residue His-304. A divalent metal cation-binding residues include Glu-332 and Glu-427.

It belongs to the peptidase M24A family. Methionine aminopeptidase eukaryotic type 2 subfamily. Requires Co(2+) as cofactor. Zn(2+) serves as cofactor. Mn(2+) is required as a cofactor. It depends on Fe(2+) as a cofactor.

It is found in the cytoplasm. The catalysed reaction is Release of N-terminal amino acids, preferentially methionine, from peptides and arylamides.. In terms of biological role, cotranslationally removes the N-terminal methionine from nascent proteins. The N-terminal methionine is often cleaved when the second residue in the primary sequence is small and uncharged (Met-Ala-, Cys, Gly, Pro, Ser, Thr, or Val). This chain is Methionine aminopeptidase 2-1, found in Blastomyces gilchristii (strain SLH14081) (Blastomyces dermatitidis).